Here is a 268-residue protein sequence, read N- to C-terminus: Interleukin-1 beta (268 aa).

Positions 1–115 (MAAVPDTSDM…DNWDEGYVCD (115 aa)) are excised as a propeptide.

This sequence belongs to the IL-1 family. As to quaternary structure, monomer. In its precursor form, weakly interacts with full-length MEFV; the mature cytokine does not interact at all. Interacts with integrins ITGAV:ITGBV and ITGA5:ITGB1; integrin-binding is required for IL1B signaling. Interacts with cargo receptor TMED10; the interaction is direct and is required for the secretion of IL1B mature form. Interacts with HSP90AB1; the interaction facilitates cargo translocation into the ERGIC. Interacts with HSP90B1; the interaction facilitates cargo translocation into the ERGIC.

The protein resides in the cytoplasm. It is found in the cytosol. It localises to the secreted. Its subcellular location is the lysosome. The protein localises to the extracellular exosome. Its function is as follows. Potent pro-inflammatory cytokine. Initially discovered as the major endogenous pyrogen, induces prostaglandin synthesis, neutrophil influx and activation, T-cell activation and cytokine production, B-cell activation and antibody production, and fibroblast proliferation and collagen production. Promotes Th17 differentiation of T-cells. Synergizes with IL12/interleukin-12 to induce IFNG synthesis from T-helper 1 (Th1) cells. Plays a role in angiogenesis by inducing VEGF production synergistically with TNF and IL6. Involved in transduction of inflammation downstream of pyroptosis: its mature form is specifically released in the extracellular milieu by passing through the gasdermin-D (GSDMD) pore. This Equus caballus (Horse) protein is Interleukin-1 beta (IL1B).